Here is a 185-residue protein sequence, read N- to C-terminus: Photosystem I assembly protein Ycf4 (185 aa).

Transmembrane regions (helical) follow at residues 21–43 and 63–85; these read NFCW…TSSY and GLVM…CTIL.

The protein belongs to the Ycf4 family.

The protein resides in the plastid. The protein localises to the chloroplast thylakoid membrane. Its function is as follows. Seems to be required for the assembly of the photosystem I complex. The polypeptide is Photosystem I assembly protein Ycf4 (Brassica oleracea (Wild cabbage)).